Reading from the N-terminus, the 533-residue chain is Na(+)/H(+) antiporter NhaB (533 aa).

11 consecutive transmembrane segments (helical) span residues isoleucine 10–isoleucine 30, proline 67–leucine 87, valine 96–phenylalanine 116, valine 131–isoleucine 165, leucine 209–proline 229, isoleucine 247–valine 267, alanine 310–isoleucine 330, glutamate 355–isoleucine 375, leucine 396–glycine 416, alanine 454–isoleucine 474, and alanine 485–leucine 505.

The protein belongs to the NhaB Na(+)/H(+) (TC 2.A.34) antiporter family.

The protein resides in the cell inner membrane. It catalyses the reaction 2 Na(+)(in) + 3 H(+)(out) = 2 Na(+)(out) + 3 H(+)(in). Functionally, na(+)/H(+) antiporter that extrudes sodium in exchange for external protons. This Shewanella oneidensis (strain ATCC 700550 / JCM 31522 / CIP 106686 / LMG 19005 / NCIMB 14063 / MR-1) protein is Na(+)/H(+) antiporter NhaB.